Consider the following 88-residue polypeptide: Large ribosomal subunit protein bL27 (88 aa).

Residues 1–21 are disordered; that stretch reads MAHKKGASSSRNGRDSAAQRL.

The protein belongs to the bacterial ribosomal protein bL27 family.

This chain is Large ribosomal subunit protein bL27, found in Mycobacterium marinum (strain ATCC BAA-535 / M).